A 448-amino-acid chain; its full sequence is Antizyme inhibitor 1 (448 aa).

This sequence belongs to the Orn/Lys/Arg decarboxylase class-II family. ODC antizyme inhibitor subfamily. Monomer. Interacts with OAZ1 and OAZ3; this interaction disrupts the interaction between the antizyme and ODC1. Ubiquitinated, leading to its proteasomal degradation; a process that is reduced in presence of antizyme OAZ1. As to expression, expressed during testis development.

It is found in the nucleus. Its function is as follows. Antizyme inhibitor (AZI) protein that positively regulates ornithine decarboxylase (ODC) activity and polyamine uptake. AZI is an enzymatically inactive ODC homolog that counteracts the negative effect of ODC antizymes (AZs) OAZ1, OAZ2 and OAZ3 on ODC activity by competing with ODC for antizyme-binding. Inhibits antizyme-dependent ODC degradation and releases ODC monomers from their inactive complex with antizymes, leading to formation of the catalytically active ODC homodimer and restoring polyamine production. This Mus musculus (Mouse) protein is Antizyme inhibitor 1 (Azin1).